A 251-amino-acid polypeptide reads, in one-letter code: Coproheme decarboxylase (251 aa).

Fe-coproporphyrin III contacts are provided by residues Arg133, 147-151 (YPMSK), His174, Gln187, and Ser225. Tyr147 is an active-site residue.

It belongs to the ChdC family. Type 1 subfamily. Requires Fe-coproporphyrin III as cofactor.

It carries out the reaction Fe-coproporphyrin III + 2 H2O2 + 2 H(+) = heme b + 2 CO2 + 4 H2O. The enzyme catalyses Fe-coproporphyrin III + H2O2 + H(+) = harderoheme III + CO2 + 2 H2O. The catalysed reaction is harderoheme III + H2O2 + H(+) = heme b + CO2 + 2 H2O. It functions in the pathway porphyrin-containing compound metabolism; protoheme biosynthesis. Involved in coproporphyrin-dependent heme b biosynthesis. Catalyzes the decarboxylation of Fe-coproporphyrin III (coproheme) to heme b (protoheme IX), the last step of the pathway. The reaction occurs in a stepwise manner with a three-propionate intermediate. The protein is Coproheme decarboxylase of Listeria monocytogenes serotype 4a (strain HCC23).